Here is a 454-residue protein sequence, read N- to C-terminus: Jacalin-related lectin 37 (454 aa).

The region spanning 295-438 (SRFTPPRGIQ…LTALGVHFSP (144 aa)) is the Jacalin-type lectin domain.

The protein belongs to the jacalin lectin family.

This chain is Jacalin-related lectin 37 (JAL37), found in Arabidopsis thaliana (Mouse-ear cress).